A 311-amino-acid polypeptide reads, in one-letter code: AT-hook motif nuclear-localized protein 27 (311 aa).

The interval 40–105 (HHHQHQQHQQ…KNKAKPPIIV (66 aa)) is disordered. Residues 55 to 75 (DDSRESDHSNKDHHQQGRPDS) are compositionally biased toward basic and acidic residues. The segment at residues 86 to 98 (KRPRGRPPGSKNK) is a DNA-binding region (a.T hook). Positions 110-258 (PNALRSHVLE…EEGGGGGGGG (149 aa)) constitute a PPC domain. The tract at residues 178–183 (GRFEIL) is required for the binding to non-AHL interactors. Residues 246–311 (EEEEEGGGGG…GAGTPSRPPF (66 aa)) form a disordered region. Over residues 252–262 (GGGGGGGGGGP) the composition is skewed to gly residues. Positions 263–277 (PQMQQAPSASPPSGV) are enriched in low complexity. Over residues 278–292 (TGQGQLGGNVGGYGF) the composition is skewed to gly residues.

Homodimer. Interacts with AHL12, AHL25, AHL29, TCP4, TCP13, EF114, ATAF2/NAC081, histone H2B.1, histone H3.3 and histone H4. As to expression, expressed in the hypocotyl and the vascular tissue of seedling.

The protein resides in the nucleus. Transcription factor that specifically binds AT-rich DNA sequences related to the nuclear matrix attachment regions (MARs). Negatively regulates plant innate immunity (PTI) to pathogens through the down-regulation of the PAMP-triggered FRK1 expression. Acts redundantly with AHL18, AHL22 and AHL29 in the regulation of flowering and regulation of the hypocotyl elongation. Acts as a chromatin remodeling factor that negatively regulates the leaf senescence. Acts redundantly with AHL29/SOB3 to modulate hypocotyl growth inhibition in response to light. In Arabidopsis thaliana (Mouse-ear cress), this protein is AT-hook motif nuclear-localized protein 27.